A 443-amino-acid chain; its full sequence is Thymidine phosphorylase (443 aa).

The protein belongs to the thymidine/pyrimidine-nucleoside phosphorylase family. Homodimer.

It catalyses the reaction thymidine + phosphate = 2-deoxy-alpha-D-ribose 1-phosphate + thymine. It functions in the pathway pyrimidine metabolism; dTMP biosynthesis via salvage pathway; dTMP from thymine: step 1/2. The enzymes which catalyze the reversible phosphorolysis of pyrimidine nucleosides are involved in the degradation of these compounds and in their utilization as carbon and energy sources, or in the rescue of pyrimidine bases for nucleotide synthesis. The chain is Thymidine phosphorylase from Shewanella denitrificans (strain OS217 / ATCC BAA-1090 / DSM 15013).